Reading from the N-terminus, the 156-residue chain is Cyanate hydratase (156 aa).

Active-site residues include R96, E99, and S122.

This sequence belongs to the cyanase family.

The enzyme catalyses cyanate + hydrogencarbonate + 3 H(+) = NH4(+) + 2 CO2. Its function is as follows. Catalyzes the reaction of cyanate with bicarbonate to produce ammonia and carbon dioxide. The sequence is that of Cyanate hydratase from Photorhabdus laumondii subsp. laumondii (strain DSM 15139 / CIP 105565 / TT01) (Photorhabdus luminescens subsp. laumondii).